Here is a 310-residue protein sequence, read N- to C-terminus: tRNA dimethylallyltransferase (310 aa).

ATP is bound at residue 14–21; that stretch reads GPTASGKT. A substrate-binding site is contributed by 16 to 21; the sequence is TASGKT. The tract at residues 39 to 42 is interaction with substrate tRNA; it reads DSMQ.

The protein belongs to the IPP transferase family. As to quaternary structure, monomer. It depends on Mg(2+) as a cofactor.

It carries out the reaction adenosine(37) in tRNA + dimethylallyl diphosphate = N(6)-dimethylallyladenosine(37) in tRNA + diphosphate. Its function is as follows. Catalyzes the transfer of a dimethylallyl group onto the adenine at position 37 in tRNAs that read codons beginning with uridine, leading to the formation of N6-(dimethylallyl)adenosine (i(6)A). In Corynebacterium jeikeium (strain K411), this protein is tRNA dimethylallyltransferase.